Reading from the N-terminus, the 855-residue chain is Leucine--tRNA ligase (855 aa).

A 'HIGH' region motif is present at residues Pro42–His52. The interval Ser292–Lys311 is disordered. Over residues Glu293–Lys303 the composition is skewed to basic and acidic residues. A 'KMSKS' region motif is present at residues Lys614–Ser618. Lys617 lines the ATP pocket.

It belongs to the class-I aminoacyl-tRNA synthetase family.

The protein resides in the cytoplasm. It carries out the reaction tRNA(Leu) + L-leucine + ATP = L-leucyl-tRNA(Leu) + AMP + diphosphate. The polypeptide is Leucine--tRNA ligase (Acaryochloris marina (strain MBIC 11017)).